Here is a 166-residue protein sequence, read N- to C-terminus: Small ribosomal subunit protein uS9 (166 aa).

Positions 1 to 16 (MSDTTNEVEETYEVDE) are enriched in acidic residues. Positions 1 to 45 (MSDTTNEVEETYEVDEQGIAYSSESAPSADAPLRPATIAPANATG) are disordered.

This sequence belongs to the universal ribosomal protein uS9 family.

This is Small ribosomal subunit protein uS9 from Nocardioides sp. (strain ATCC BAA-499 / JS614).